A 291-amino-acid chain; its full sequence is 33 kDa chaperonin (291 aa).

Intrachain disulfides connect C235–C237 and C268–C271.

The protein belongs to the HSP33 family. In terms of processing, under oxidizing conditions two disulfide bonds are formed involving the reactive cysteines. Under reducing conditions zinc is bound to the reactive cysteines and the protein is inactive.

Its subcellular location is the cytoplasm. Its function is as follows. Redox regulated molecular chaperone. Protects both thermally unfolding and oxidatively damaged proteins from irreversible aggregation. Plays an important role in the bacterial defense system toward oxidative stress. In Bacillus subtilis (strain 168), this protein is 33 kDa chaperonin.